The chain runs to 368 residues: Cobalt-precorrin-5B C(1)-methyltransferase (368 aa).

The protein belongs to the CbiD family.

It catalyses the reaction Co-precorrin-5B + S-adenosyl-L-methionine = Co-precorrin-6A + S-adenosyl-L-homocysteine. It participates in cofactor biosynthesis; adenosylcobalamin biosynthesis; cob(II)yrinate a,c-diamide from sirohydrochlorin (anaerobic route): step 6/10. Its function is as follows. Catalyzes the methylation of C-1 in cobalt-precorrin-5B to form cobalt-precorrin-6A. This Brucella anthropi (strain ATCC 49188 / DSM 6882 / CCUG 24695 / JCM 21032 / LMG 3331 / NBRC 15819 / NCTC 12168 / Alc 37) (Ochrobactrum anthropi) protein is Cobalt-precorrin-5B C(1)-methyltransferase.